The following is a 158-amino-acid chain: Ribonuclease H (158 aa).

Residues 3–144 enclose the RNase H type-1 domain; that stretch reads ELKLIHIFTD…CDQLARAAAE (142 aa). Mg(2+) is bound by residues Asp-12, Glu-50, Asp-72, and Asp-136. Residues 137 to 158 are disordered; the sequence is QLARAAAEASPTQVDEGYQPES.

The protein belongs to the RNase H family. Monomer. It depends on Mg(2+) as a cofactor.

The protein localises to the cytoplasm. The catalysed reaction is Endonucleolytic cleavage to 5'-phosphomonoester.. Endonuclease that specifically degrades the RNA of RNA-DNA hybrids. This is Ribonuclease H from Shewanella sp. (strain ANA-3).